A 312-amino-acid chain; its full sequence is Glyoxylate/hydroxypyruvate reductase A (312 aa).

Arginine 227 is an active-site residue. The active-site Proton donor is histidine 275.

Belongs to the D-isomer specific 2-hydroxyacid dehydrogenase family. GhrA subfamily.

Its subcellular location is the cytoplasm. The catalysed reaction is glycolate + NADP(+) = glyoxylate + NADPH + H(+). It carries out the reaction (R)-glycerate + NAD(+) = 3-hydroxypyruvate + NADH + H(+). The enzyme catalyses (R)-glycerate + NADP(+) = 3-hydroxypyruvate + NADPH + H(+). In terms of biological role, catalyzes the NADPH-dependent reduction of glyoxylate and hydroxypyruvate into glycolate and glycerate, respectively. This Escherichia coli (strain ATCC 8739 / DSM 1576 / NBRC 3972 / NCIMB 8545 / WDCM 00012 / Crooks) protein is Glyoxylate/hydroxypyruvate reductase A.